Consider the following 281-residue polypeptide: Plasmanylethanolamine desaturase (281 aa).

Topologically, residues 1–28 (MKTQEIEKKVRQQDAQVLAQGYSPAIRA) are cytoplasmic. Residues 29-45 (MEIAAIVSFVSLEVALV) form a helical membrane-spanning segment. The Periplasmic segment spans residues 46–58 (YRLWGTPYAGTWL). The helical transmembrane segment at 59–75 (LLSAVLLGYLAADFVSG) threads the bilayer. Topologically, residues 76–123 (FVHWMGDTWGSTEMPVLGKALIRPFREHHVDEKAITRHDFVETNGNNC) are cytoplasmic. The chain crosses the membrane as a helical span at residues 124–138 (LISLPVAIIALCLPM). The Periplasmic segment spans residues 139 to 142 (SGPG). A helical transmembrane segment spans residues 143-159 (WVFCASFLGAMIFWVMA). Residues 160–281 (TNQFHKWSHM…VQEKPASTRP (122 aa)) are Cytoplasmic-facing. A Histidine box-1 motif is present at residues 164–168 (HKWSH). The short motif at 191-195 (HRIHH) is the Histidine box-2 element.

This sequence belongs to the fatty acid desaturase CarF family. In terms of assembly, interacts with CarR.

The protein resides in the cell inner membrane. It carries out the reaction a 1-(1,2-saturated alkyl)-2-acyl-sn-glycero-3-phosphoethanolamine + 2 Fe(II)-[cytochrome b5] + O2 + 2 H(+) = a 1-O-(1Z-alkenyl)-2-acyl-sn-glycero-3-phosphoethanolamine + 2 Fe(III)-[cytochrome b5] + 2 H2O. It catalyses the reaction 1-O-(13-methyltetradecyl)-2-(13-methyltetradecanoyl)-sn-glycero-3-phosphoethanolamine + 2 Fe(II)-[cytochrome b5] + O2 + 2 H(+) = 1-O-(1Z-13-methyltetradecenyl)-2-(13-methyltetradecanoyl)-sn-glycero-3-phosphoethanolamine + 2 Fe(III)-[cytochrome b5] + 2 H2O. Its function is as follows. Plasmanylethanolamine desaturase involved in plasmalogen biogenesis in the membrane, required for light-induced carotenogenesis. Plasmalogens are glycerophospholipids with a hydrocarbon chain linked by a vinyl ether bond at the glycerol sn-1 position, and are involved in antioxidative and signaling mechanisms, most precisely in sensing photooxidative stress through singlet oxygen. Participates in the light-dependent inactivation of the antisigma factor CarR. Mediates signaling by singlet oxygen, generated via photoexcited protoporphyrin IX. In Myxococcus xanthus, this protein is Plasmanylethanolamine desaturase.